The sequence spans 241 residues: 1-(5-phosphoribosyl)-5-[(5-phosphoribosylamino)methylideneamino] imidazole-4-carboxamide isomerase (241 aa).

D8 functions as the Proton acceptor in the catalytic mechanism. D130 (proton donor) is an active-site residue.

This sequence belongs to the HisA/HisF family.

It localises to the cytoplasm. The catalysed reaction is 1-(5-phospho-beta-D-ribosyl)-5-[(5-phospho-beta-D-ribosylamino)methylideneamino]imidazole-4-carboxamide = 5-[(5-phospho-1-deoxy-D-ribulos-1-ylimino)methylamino]-1-(5-phospho-beta-D-ribosyl)imidazole-4-carboxamide. It functions in the pathway amino-acid biosynthesis; L-histidine biosynthesis; L-histidine from 5-phospho-alpha-D-ribose 1-diphosphate: step 4/9. This chain is 1-(5-phosphoribosyl)-5-[(5-phosphoribosylamino)methylideneamino] imidazole-4-carboxamide isomerase, found in Leptospira borgpetersenii serovar Hardjo-bovis (strain JB197).